A 416-amino-acid polypeptide reads, in one-letter code: Serine hydroxymethyltransferase (416 aa).

(6S)-5,6,7,8-tetrahydrofolate-binding positions include Leu-121 and 125–127; that span reads GHL. Lys-229 bears the N6-(pyridoxal phosphate)lysine mark.

It belongs to the SHMT family. Homodimer. Requires pyridoxal 5'-phosphate as cofactor.

It localises to the cytoplasm. It catalyses the reaction (6R)-5,10-methylene-5,6,7,8-tetrahydrofolate + glycine + H2O = (6S)-5,6,7,8-tetrahydrofolate + L-serine. It functions in the pathway one-carbon metabolism; tetrahydrofolate interconversion. Its pathway is amino-acid biosynthesis; glycine biosynthesis; glycine from L-serine: step 1/1. In terms of biological role, catalyzes the reversible interconversion of serine and glycine with tetrahydrofolate (THF) serving as the one-carbon carrier. This reaction serves as the major source of one-carbon groups required for the biosynthesis of purines, thymidylate, methionine, and other important biomolecules. Also exhibits THF-independent aldolase activity toward beta-hydroxyamino acids, producing glycine and aldehydes, via a retro-aldol mechanism. The chain is Serine hydroxymethyltransferase from Bordetella avium (strain 197N).